Here is a 192-residue protein sequence, read N- to C-terminus: Ribosome maturation factor RimM (192 aa).

One can recognise a PRC barrel domain in the interval 99-186 (ADEYHVSELV…RIEIAPPPGL (88 aa)).

Belongs to the RimM family. As to quaternary structure, binds ribosomal protein uS19.

It localises to the cytoplasm. Functionally, an accessory protein needed during the final step in the assembly of 30S ribosomal subunit, possibly for assembly of the head region. Essential for efficient processing of 16S rRNA. May be needed both before and after RbfA during the maturation of 16S rRNA. It has affinity for free ribosomal 30S subunits but not for 70S ribosomes. The polypeptide is Ribosome maturation factor RimM (Microcystis aeruginosa (strain NIES-843 / IAM M-2473)).